A 338-amino-acid polypeptide reads, in one-letter code: Secretory carrier-associated membrane protein 1 (338 aa).

Residues Met1–Ile63 form a disordered region. N-acetylserine is present on Ser2. Ser2 is subject to Phosphoserine. Topologically, residues Ser2 to Leu155 are cytoplasmic. Thr45 is subject to Phosphothreonine. A helical membrane pass occupies residues Trp156–Val176. The Lumenal portion of the chain corresponds to Asp177–Gly181. A helical membrane pass occupies residues Val182–Trp202. Over Tyr203 to Arg217 the chain is Cytoplasmic. The chain crosses the membrane as a helical span at residues Phe218–Gly238. The Lumenal segment spans residues Phe239 to Gly261. Residues Ile262–Phe282 traverse the membrane as a helical segment. Residues Lys283–Ile338 are Cytoplasmic-facing.

The protein belongs to the SCAMP family. In terms of assembly, interacts with SYNRG, ITSN1 and SLC9A7.

Its subcellular location is the golgi apparatus. The protein resides in the trans-Golgi network membrane. It is found in the recycling endosome membrane. Functionally, functions in post-Golgi recycling pathways. Acts as a recycling carrier to the cell surface. This chain is Secretory carrier-associated membrane protein 1 (SCAMP1), found in Sus scrofa (Pig).